A 396-amino-acid chain; its full sequence is Phosphoglycerate kinase (396 aa).

Substrate is bound by residues 21 to 23 (DFN), R36, 59 to 62 (HLGK), R119, and R156. Residues K206, E325, and 352 to 355 (GGDS) contribute to the ATP site.

Belongs to the phosphoglycerate kinase family. As to quaternary structure, monomer.

The protein resides in the cytoplasm. The catalysed reaction is (2R)-3-phosphoglycerate + ATP = (2R)-3-phospho-glyceroyl phosphate + ADP. The protein operates within carbohydrate degradation; glycolysis; pyruvate from D-glyceraldehyde 3-phosphate: step 2/5. The polypeptide is Phosphoglycerate kinase (Staphylococcus carnosus (strain TM300)).